The sequence spans 274 residues: Putative ankyrin repeat protein R597 (274 aa).

ANK repeat units lie at residues 78-112 (VGLPSLGYFTKNKDEFHNSLELMKLLLQYDMNNND), 114-144 (PISEYLYNAVKQNNFEKVKLLIDNGINSLKI), 146-174 (SRYHFENKYIYNNHEIVKYMIDNGVDIQG), and 176-205 (NLSYALHSCIISDNNDGVEYYFNIGANIND).

The chain is Putative ankyrin repeat protein R597 from Acanthamoeba polyphaga mimivirus (APMV).